Consider the following 689-residue polypeptide: Glycine--tRNA ligase beta subunit (689 aa).

The protein belongs to the class-II aminoacyl-tRNA synthetase family. As to quaternary structure, tetramer of two alpha and two beta subunits.

The protein resides in the cytoplasm. The enzyme catalyses tRNA(Gly) + glycine + ATP = glycyl-tRNA(Gly) + AMP + diphosphate. This Cronobacter sakazakii (strain ATCC BAA-894) (Enterobacter sakazakii) protein is Glycine--tRNA ligase beta subunit.